Reading from the N-terminus, the 219-residue chain is Proteasome subunit beta (219 aa).

The propeptide at 1–14 is removed in mature form; by autocatalysis; the sequence is MISNSEYHKEYMKG. Threonine 15 serves as the catalytic Nucleophile.

Belongs to the peptidase T1B family. In terms of assembly, the 20S proteasome core is composed of 14 alpha and 14 beta subunits that assemble into four stacked heptameric rings, resulting in a barrel-shaped structure. The two inner rings, each composed of seven catalytic beta subunits, are sandwiched by two outer rings, each composed of seven alpha subunits. The catalytic chamber with the active sites is on the inside of the barrel. Has a gated structure, the ends of the cylinder being occluded by the N-termini of the alpha-subunits. Is capped at one or both ends by the proteasome regulatory ATPase, PAN.

It is found in the cytoplasm. The enzyme catalyses Cleavage of peptide bonds with very broad specificity.. The formation of the proteasomal ATPase PAN-20S proteasome complex, via the docking of the C-termini of PAN into the intersubunit pockets in the alpha-rings, triggers opening of the gate for substrate entry. Interconversion between the open-gate and close-gate conformations leads to a dynamic regulation of the 20S proteasome proteolysis activity. Component of the proteasome core, a large protease complex with broad specificity involved in protein degradation. The sequence is that of Proteasome subunit beta from Methanococcus maripaludis (strain C6 / ATCC BAA-1332).